The sequence spans 209 residues: MTQARTKKNPPLRVGVGGPVGSGKTTLLEMLCKAMRDRYDLVAITNDIYTKEDQRLLTISGALPAERIMGVETGGCPHTAIREDASINLEAVERMLAKFPDADVVFIESGGDNLAATFSPELSDLTIYVIDVAGGEKIPRKGGPGITKSDLLVINKTDLAPYVGASLEVMESDARKMRGGRPFVMGSVKSGQGLDEVIRFIEQQGMLGV.

18–25 provides a ligand contact to GTP; that stretch reads GPVGSGKT.

This sequence belongs to the SIMIBI class G3E GTPase family. UreG subfamily. As to quaternary structure, homodimer. UreD, UreF and UreG form a complex that acts as a GTP-hydrolysis-dependent molecular chaperone, activating the urease apoprotein by helping to assemble the nickel containing metallocenter of UreC. The UreE protein probably delivers the nickel.

It is found in the cytoplasm. Facilitates the functional incorporation of the urease nickel metallocenter. This process requires GTP hydrolysis, probably effectuated by UreG. The polypeptide is Urease accessory protein UreG (Cupriavidus pinatubonensis (strain JMP 134 / LMG 1197) (Cupriavidus necator (strain JMP 134))).